The following is a 204-amino-acid chain: CASP-like protein 1B2 (204 aa).

The Cytoplasmic segment spans residues 1–28; that stretch reads MASKGEEKPELVGSKQGIVSVTKAKHDQ. A helical transmembrane segment spans residues 29-49; it reads IVLVLRVVAFLATASATIVMG. The Extracellular segment spans residues 50–80; the sequence is LNQETKTLLVGTIGTTPIRATLKAKFQHTPA. A helical membrane pass occupies residues 81-101; sequence FVFFVVANGLASVYNLVMLGV. The Cytoplasmic segment spans residues 102-114; that stretch reads DVFGRKLDCKGLR. Residues 115–135 traverse the membrane as a helical segment; it reads LVIISILDMVIVAVVAAGASS. Residues 136–168 lie on the Extracellular side of the membrane; the sequence is AAFMAELGKNGNSHAKWNKICDKFESFCHQGGG. A helical transmembrane segment spans residues 169–189; the sequence is ALIPSFIALLLLFLISAISII. Over 190–204 the chain is Cytoplasmic; the sequence is TLHNQKLTSPHATTP.

This sequence belongs to the Casparian strip membrane proteins (CASP) family. Homodimer and heterodimers.

Its subcellular location is the cell membrane. The protein is CASP-like protein 1B2 of Vitis vinifera (Grape).